The chain runs to 574 residues: Galectin-3-binding protein (574 aa).

The N-terminal stretch at 1-18 (MALLWLLSVFLLVPGTQG) is a signal peptide. The SRCR domain occupies 24–124 (MRLVNGASAS…HEKDAGVVCS (101 aa)). 3 disulfides stabilise this stretch: C49-C113, C62-C123, and C93-C103. N69, N96, N102, and N125 each carry an N-linked (GlcNAc...) asparagine glycan. The 69-residue stretch at 153–221 (CDLFIQVTGQ…FYSRRIEVSM (69 aa)) folds into the BTB domain. In terms of domain architecture, BACK spans 260-360 (PLELYEYAQA…MLPQELFELQ (101 aa)). 4 N-linked (GlcNAc...) asparagine glycosylation sites follow: N362, N398, N540, and N569.

In terms of assembly, homodimers and homomultimers. The multimers form ring-like structures with a diameter of 30-40 nm. Binds LGALS1 and LGALS3. Binds ITGB1, COL4A1, COL5A1, COL6A1, FN1 and NID. The unglycosylated form interacts with PDE4DIP; this interaction, which is PDE4DIP isoform-specific, may connect a pericentrosomal complex to the gamma-tubulin ring complex (gamma-TuRC) to promote microtubule assembly and acetylation. As to expression, detected in thyroid (at protein level).

Its subcellular location is the secreted. The protein localises to the extracellular space. It localises to the extracellular matrix. Its function is as follows. Promotes integrin-mediated cell adhesion. May stimulate host defense against viruses and tumor cells. This Rattus norvegicus (Rat) protein is Galectin-3-binding protein (Lgals3bp).